The sequence spans 429 residues: Nucleotide exchange factor Sil1 (429 aa).

The N-terminal stretch at 1-24 (MSGKQVVILLGSVLILGCLQVAAA) is a signal peptide. The N-linked (GlcNAc...) asparagine glycan is linked to N29. Residues 70–98 (DESERGTSLQSQPDDQNARESHDDNEPLA) are disordered. Positions 75 to 84 (GTSLQSQPDD) are enriched in polar residues. A compositionally biased stretch (basic and acidic residues) spans 85–94 (QNARESHDDN). The stretch at 104–135 (DIIEESIRRVKEQKKSYAELRKAYKEFQKNFR) forms a coiled coil. N-linked (GlcNAc...) asparagine glycosylation is found at N150, N199, and N400. The short motif at 426-429 (HTEL) is the Prevents secretion from ER element.

Belongs to the SIL1 family.

Its subcellular location is the endoplasmic reticulum lumen. Its function is as follows. Required for protein translocation and folding in the endoplasmic reticulum (ER). Functions as a nucleotide exchange factor for an ER lumenal chaperone of HSP70 family. This chain is Nucleotide exchange factor Sil1, found in Drosophila melanogaster (Fruit fly).